A 752-amino-acid chain; its full sequence is Exocyst complex component EXO84B (752 aa).

Disordered stretches follow at residues 511-532 (QTGQ…NPEQ) and 724-752 (TKGN…HGSY). Over residues 515–532 (RTDDLRRPLDRQNRNPEQ) the composition is skewed to basic and acidic residues. A compositionally biased stretch (low complexity) spans 733 to 752 (SPTASVSAQSVSSARSHGSY).

It belongs to the EXO84 family. In terms of assembly, the exocyst complex is composed of SEC3, SEC5, SEC6, SEC8, SEC10, EXO70A1 and EXO84B. Interacts with SEC6, SEC10, SEC15B and EXO70A1. Interacts with EXO70B1. Binds directly to B1L.

It is found in the cytoplasm. The protein localises to the cytosol. It localises to the perinuclear region. The protein resides in the cytoskeleton. Its subcellular location is the phragmoplast. It is found in the secreted. The protein localises to the cell wall. It localises to the cell membrane. Its function is as follows. Component of the exocyst complex involved in the docking of exocytic vesicles with fusion sites on the plasma membrane during regulated or polarized secretion. Involved in polarized cell growth and organ morphogenesis. During cytokinesis, involved in cell plate initiation, cell plate maturation and formation of new primary cell wall. Probable component of an exocyst subcomplex specifically involved in autophagy-related, Golgi-independent membrane traffic to the vacuole. Regulates autophagosome formation and autophagy-related Golgi-independent import into the vacuole. Mediates ABCG36/PEN3 outer-membrane polarity at the periphery of lateral root cap and root epidermal cells. This chain is Exocyst complex component EXO84B, found in Arabidopsis thaliana (Mouse-ear cress).